Consider the following 264-residue polypeptide: Undecaprenyl-diphosphatase (264 aa).

7 helical membrane-spanning segments follow: residues 38–58 (RSDF…VLVF), 75–95 (REYV…GLVV), 106–126 (VSPV…VEAY), 136–156 (VTWT…VFPG), 181–201 (FVFL…FLEM), 217–237 (VAFL…MGYI), and 242–262 (FTAF…WLPS).

This sequence belongs to the UppP family.

The protein resides in the cell membrane. The enzyme catalyses di-trans,octa-cis-undecaprenyl diphosphate + H2O = di-trans,octa-cis-undecaprenyl phosphate + phosphate + H(+). Catalyzes the dephosphorylation of undecaprenyl diphosphate (UPP). Confers resistance to bacitracin. The sequence is that of Undecaprenyl-diphosphatase from Stenotrophomonas maltophilia (strain K279a).